The chain runs to 218 residues: MSIISAEAQKVREALIAKGIETPTVQLTKDKDSRRAEIQQHMRSVLELLGLDLQDDSLEETPHRLAKMYVDEIFSGLDYATFPKITNIENRMKVSEMVLVDDITLTSTCEHHFVTIDGKVAVAYYPKKWVIGLSKINRVVQFFAQRPQVQERFTEQILTAFQTILETDDVAVFVKATHFCVKCRGVKDTNSYTVTSAFGGVFLEDRETRKEFLGLINK.

The Zn(2+) site is built by Cys109, His112, and Cys180.

It belongs to the GTP cyclohydrolase I family. In terms of assembly, toroid-shaped homodecamer, composed of two pentamers of five dimers.

The enzyme catalyses GTP + H2O = 7,8-dihydroneopterin 3'-triphosphate + formate + H(+). It participates in cofactor biosynthesis; 7,8-dihydroneopterin triphosphate biosynthesis; 7,8-dihydroneopterin triphosphate from GTP: step 1/1. This is GTP cyclohydrolase 1 from Actinobacillus pleuropneumoniae serotype 5b (strain L20).